We begin with the raw amino-acid sequence, 435 residues long: NADH-quinone oxidoreductase subunit D (435 aa).

Belongs to the complex I 49 kDa subunit family. NDH-1 is composed of 14 different subunits. Subunits NuoB, C, D, E, F, and G constitute the peripheral sector of the complex.

It localises to the cell inner membrane. The enzyme catalyses a quinone + NADH + 5 H(+)(in) = a quinol + NAD(+) + 4 H(+)(out). Functionally, NDH-1 shuttles electrons from NADH, via FMN and iron-sulfur (Fe-S) centers, to quinones in the respiratory chain. The immediate electron acceptor for the enzyme in this species is believed to be ubiquinone. Couples the redox reaction to proton translocation (for every two electrons transferred, four hydrogen ions are translocated across the cytoplasmic membrane), and thus conserves the redox energy in a proton gradient. In Xanthomonas oryzae pv. oryzae (strain MAFF 311018), this protein is NADH-quinone oxidoreductase subunit D.